The sequence spans 369 residues: Somatostatin receptor type 2 (369 aa).

The Extracellular portion of the chain corresponds to Met1–Asn43. Asn9, Asn22, Asn29, and Asn32 each carry an N-linked (GlcNAc...) asparagine glycan. Residues Ala44–Val67 form a helical membrane-spanning segment. Residues Ile68–Thr78 lie on the Cytoplasmic side of the membrane. A helical membrane pass occupies residues Asn79–Val103. The Extracellular portion of the chain corresponds to Ala104 to Val118. The cysteines at positions 115 and 193 are disulfide-linked. The chain crosses the membrane as a helical span at residues Met119 to Ile138. The Cytoplasmic portion of the chain corresponds to Asp139–Met161. Residues Ile162–Ala181 form a helical membrane-spanning segment. The Extracellular portion of the chain corresponds to Gly182–Gly207. A helical transmembrane segment spans residues Phe208–Leu229. The Cytoplasmic portion of the chain corresponds to Phe230 to Lys253. The helical transmembrane segment at Val254–Ser278 threads the bilayer. Residues Ser279–Pro288 are Extracellular-facing. The helical transmembrane segment at Ala289–Ala303 threads the bilayer. At Asn304–Ile369 the chain is on the cytoplasmic side. Cys328 carries S-palmitoyl cysteine lipidation. A phosphoserine mark is found at Ser341, Ser343, and Ser348. A phosphothreonine mark is found at Thr353 and Thr354.

Belongs to the G-protein coupled receptor 1 family. As to quaternary structure, homodimer and heterodimer with SSTR3 and SSTR5. Heterodimerization with SSTR3 inactivates SSTR3 receptor function. Heterodimerization with SSTR5 is enhanced by agonist stimulation of SSTR2 and increases SSTR2 cell growth inhibition activity. Following agonist stimulation, homodimers dissociate into monomers which is required for receptor internalization. Interacts with beta-arrestin; this interaction is necessary for receptor internalization and is destabilized by heterodimerization with SSTR5 which results in increased recycling of SSTR2 to the cell surface. Interacts (via C-terminus) with SHANK1 (via PDZ domain). Post-translationally, phosphorylated on serine and threonine residues in response to agonist stimulation, leading to receptor desensitization and rapid internalization. Phosphorylated to a greater extent on serine than threonine residues. Threonine phosphorylation is required for arrestin binding and receptor endocytosis but is not necessary for desensitization.

The protein resides in the cell membrane. It is found in the cytoplasm. In terms of biological role, receptor for somatostatin-14 and -28. This receptor is coupled via pertussis toxin sensitive G proteins to inhibition of adenylyl cyclase. In addition it stimulates phosphotyrosine phosphatase and PLC via pertussis toxin insensitive as well as sensitive G proteins. Inhibits calcium entry by suppressing voltage-dependent calcium channels. Acts as the functionally dominant somatostatin receptor in pancreatic alpha- and beta-cells where it mediates the inhibitory effect of somatostatin-14 on hormone secretion. Inhibits cell growth through enhancement of MAPK1 and MAPK2 phosphorylation and subsequent up-regulation of CDKN1B. Stimulates neuronal migration and axon outgrowth and may participate in neuron development and maturation during brain development. Mediates negative regulation of insulin receptor signaling through PTPN6. Inactivates SSTR3 receptor function following heterodimerization. In Sus scrofa (Pig), this protein is Somatostatin receptor type 2 (SSTR2).